Consider the following 147-residue polypeptide: Basic phospholipase A2 beta-bungarotoxin A1 chain (147 aa).

Residues 1-19 (MYPAHLLILSAVCVSLLGA) form the signal peptide. The propeptide occupies 20–27 (ANIPPHPL). Disulfide bonds link Cys-54–Cys-146, Cys-56–Cys-72, Cys-71–Cys-127, Cys-78–Cys-120, Cys-88–Cys-113, and Cys-106–Cys-118. Ca(2+) is bound by residues Tyr-55, Gly-57, and Gly-59. The active site involves His-75. Position 76 (Asp-76) interacts with Ca(2+). The active site involves Asp-121.

The protein belongs to the phospholipase A2 family. Group I subfamily. D49 sub-subfamily. Heterodimer; disulfide-linked. The A chains have phospholipase A2 activity and the B chains show homology with the basic protease inhibitors. It depends on Ca(2+) as a cofactor. As to expression, expressed by the venom gland.

It localises to the secreted. It carries out the reaction a 1,2-diacyl-sn-glycero-3-phosphocholine + H2O = a 1-acyl-sn-glycero-3-phosphocholine + a fatty acid + H(+). Functionally, snake venom phospholipase A2 (PLA2) that inhibits neuromuscular transmission by blocking acetylcholine release from the nerve termini. PLA2 catalyzes the calcium-dependent hydrolysis of the 2-acyl groups in 3-sn-phosphoglycerides. The chain is Basic phospholipase A2 beta-bungarotoxin A1 chain from Bungarus caeruleus (Indian krait).